Here is a 535-residue protein sequence, read N- to C-terminus: ATP-dependent RNA helicase DBP3 (535 aa).

A compositionally biased stretch (basic and acidic residues) spans 1–21 (MSKHELKDKKRKSVDGEDVSK). Residues 1-82 (MSKHELKDKK…GSETAPVGDS (82 aa)) are disordered. Residues 22–33 (SKKVKKDKKDKK) are compositionally biased toward basic residues. A compositionally biased stretch (basic and acidic residues) spans 34–72 (DKKAKDGNDKVKDKKDKNKKDKSKTDKNLKEVQETEAHT). A Q motif motif is present at residues 125-151 (LSFSHLNLHSAIQKEISKFPKPTPIQA). The Helicase ATP-binding domain maps to 154–327 (WPYLLAGKDV…STFMRAPVKV (174 aa)). Residue 167-174 (AETGSGKT) coordinates ATP. Positions 274-277 (DEAD) match the DEAD box motif. The Helicase C-terminal domain maps to 352–505 (KKEKRLLELL…PVPEELMKFG (154 aa)).

The protein belongs to the DEAD box helicase family. DDX5/DBP2 subfamily.

It localises to the nucleus. It is found in the nucleolus. It catalyses the reaction ATP + H2O = ADP + phosphate + H(+). In terms of biological role, ATP-dependent RNA helicase required for 60S ribosomal subunit synthesis. Involved in efficient pre-rRNA processing, predominantly at site A3, which is necessary for the normal formation of 25S and 5.8S rRNAs. This is ATP-dependent RNA helicase DBP3 (DBP3) from Eremothecium gossypii (strain ATCC 10895 / CBS 109.51 / FGSC 9923 / NRRL Y-1056) (Yeast).